Consider the following 355-residue polypeptide: Elongation factor Ts (355 aa).

The interval 82–85 is involved in Mg(2+) ion dislocation from EF-Tu; sequence TDFV.

This sequence belongs to the EF-Ts family.

It is found in the cytoplasm. In terms of biological role, associates with the EF-Tu.GDP complex and induces the exchange of GDP to GTP. It remains bound to the aminoacyl-tRNA.EF-Tu.GTP complex up to the GTP hydrolysis stage on the ribosome. This chain is Elongation factor Ts, found in Helicobacter hepaticus (strain ATCC 51449 / 3B1).